Reading from the N-terminus, the 651-residue chain is Acetyl-coenzyme A synthetase (651 aa).

CoA contacts are provided by residues 190–193 (RRGK) and Thr-311. ATP-binding positions include 387–389 (GEP), 411–416 (DTWWQT), Asp-508, and Arg-523. A CoA-binding site is contributed by Ser-531. Arg-534 contacts ATP. 3 residues coordinate Mg(2+): Val-545, His-547, and Val-550. Lys-617 is modified (N6-acetyllysine).

It belongs to the ATP-dependent AMP-binding enzyme family. The cofactor is Mg(2+). Post-translationally, acetylated. Deacetylation by the SIR2-homolog deacetylase activates the enzyme.

It catalyses the reaction acetate + ATP + CoA = acetyl-CoA + AMP + diphosphate. Catalyzes the conversion of acetate into acetyl-CoA (AcCoA), an essential intermediate at the junction of anabolic and catabolic pathways. AcsA undergoes a two-step reaction. In the first half reaction, AcsA combines acetate with ATP to form acetyl-adenylate (AcAMP) intermediate. In the second half reaction, it can then transfer the acetyl group from AcAMP to the sulfhydryl group of CoA, forming the product AcCoA. M.tuberculosis may use AcsA for both acetate and propionate assimilation. This is Acetyl-coenzyme A synthetase from Mycobacterium tuberculosis (strain CDC 1551 / Oshkosh).